A 228-amino-acid polypeptide reads, in one-letter code: 7-cyano-7-deazaguanine synthase (228 aa).

8–18 (LSGGLDSTTCL) provides a ligand contact to ATP. Residues Cys188, Cys198, Cys201, and Cys204 each contribute to the Zn(2+) site.

This sequence belongs to the QueC family. Zn(2+) serves as cofactor.

The enzyme catalyses 7-carboxy-7-deazaguanine + NH4(+) + ATP = 7-cyano-7-deazaguanine + ADP + phosphate + H2O + H(+). It participates in purine metabolism; 7-cyano-7-deazaguanine biosynthesis. Catalyzes the ATP-dependent conversion of 7-carboxy-7-deazaguanine (CDG) to 7-cyano-7-deazaguanine (preQ(0)). This Legionella pneumophila (strain Corby) protein is 7-cyano-7-deazaguanine synthase.